The chain runs to 48 residues: GASCRCDSDGPTSRGDTLTGTLWLIGRCPSGWHNCRGSGPFIGYCCKQ.

Cystine bridges form between C4-C45, C6-C35, and C28-C46.

It belongs to the sea anemone sodium channel inhibitory toxin family. Type I subfamily.

The protein localises to the secreted. Its subcellular location is the nematocyst. Its function is as follows. Binds voltage-dependently at site 3 of sodium channels (Nav) and inhibits the inactivation of the activated channels, thereby blocking neuronal transmission. Has effect on SCN4A/SCN1B, and SCN5A/SCN1B, has no effect on SCN2A/SCN1B, and SCN10A/SCN1B. Possesses the highest efficacy for the insect sodium channel para/tipE. Also interacts with sodium channels in cardiac cells. Shows lethality to crabs. The protein is Delta-actitoxin-Bgr2b of Bunodosoma granuliferum (Red warty sea anemone).